An 82-amino-acid polypeptide reads, in one-letter code: Small ribosomal subunit protein bS16 (82 aa).

Belongs to the bacterial ribosomal protein bS16 family.

This Microcystis aeruginosa (strain NIES-843 / IAM M-2473) protein is Small ribosomal subunit protein bS16.